Reading from the N-terminus, the 142-residue chain is Large ribosomal subunit protein uL13 (142 aa).

The protein belongs to the universal ribosomal protein uL13 family. As to quaternary structure, part of the 50S ribosomal subunit.

In terms of biological role, this protein is one of the early assembly proteins of the 50S ribosomal subunit, although it is not seen to bind rRNA by itself. It is important during the early stages of 50S assembly. In Pseudomonas aeruginosa (strain LESB58), this protein is Large ribosomal subunit protein uL13.